A 681-amino-acid polypeptide reads, in one-letter code: CAI-1 autoinducer sensor kinase/phosphatase CqsS (681 aa).

4 consecutive transmembrane segments (helical) span residues leucine 17–phenylalanine 37, alanine 73–methionine 93, isoleucine 112–alanine 132, and methionine 148–phenylalanine 168. A Histidine kinase domain is found at glycine 187 to glycine 413. Histidine 190 carries the phosphohistidine; by autocatalysis modification. In terms of domain architecture, Response regulatory spans threonine 564 to isoleucine 681. Aspartate 613 bears the 4-aspartylphosphate mark.

The protein localises to the cell membrane. The catalysed reaction is ATP + protein L-histidine = ADP + protein N-phospho-L-histidine.. Its function is as follows. Senses the quorum-sensing autoinducer CAI-1 ((S)-3-hydroxytridecan-4-one) which probably functions as an intragenus signal. The sensory signal is then relayed to LuxU and LuxO. This chain is CAI-1 autoinducer sensor kinase/phosphatase CqsS (cqsS), found in Vibrio campbellii (strain ATCC BAA-1116).